The following is a 652-amino-acid chain: DNA ligase (652 aa).

Residues 29–33 (DQEYD), 78–79 (SL), and Glu-107 each bind NAD(+). Catalysis depends on Lys-109, which acts as the N6-AMP-lysine intermediate. Positions 130, 164, 278, and 302 each coordinate NAD(+). Zn(2+) is bound by residues Cys-395, Cys-398, Cys-413, and Cys-418. Positions 577–652 (DTSAQLFGLT…VKDENWLLQL (76 aa)) constitute a BRCT domain.

The protein belongs to the NAD-dependent DNA ligase family. LigA subfamily. Requires Mg(2+) as cofactor. Mn(2+) is required as a cofactor.

It catalyses the reaction NAD(+) + (deoxyribonucleotide)n-3'-hydroxyl + 5'-phospho-(deoxyribonucleotide)m = (deoxyribonucleotide)n+m + AMP + beta-nicotinamide D-nucleotide.. DNA ligase that catalyzes the formation of phosphodiester linkages between 5'-phosphoryl and 3'-hydroxyl groups in double-stranded DNA using NAD as a coenzyme and as the energy source for the reaction. It is essential for DNA replication and repair of damaged DNA. In Streptococcus uberis (strain ATCC BAA-854 / 0140J), this protein is DNA ligase.